The chain runs to 448 residues: tRNA modification GTPase MnmE (448 aa).

(6S)-5-formyl-5,6,7,8-tetrahydrofolate is bound by residues arginine 24, glutamate 81, and lysine 120. In terms of domain architecture, TrmE-type G spans 216–373 (GLNVVLVGAP…LKRTLLCEAG (158 aa)). Asparagine 226 serves as a coordination point for K(+). GTP contacts are provided by residues 226–231 (NVGKSS), 245–251 (TDIAGTT), and 270–273 (DTAG). Serine 230 serves as a coordination point for Mg(2+). The K(+) site is built by threonine 245, isoleucine 247, and threonine 250. Threonine 251 provides a ligand contact to Mg(2+). Lysine 448 lines the (6S)-5-formyl-5,6,7,8-tetrahydrofolate pocket.

Belongs to the TRAFAC class TrmE-Era-EngA-EngB-Septin-like GTPase superfamily. TrmE GTPase family. In terms of assembly, homodimer. Heterotetramer of two MnmE and two MnmG subunits. The cofactor is K(+).

The protein resides in the cytoplasm. Functionally, exhibits a very high intrinsic GTPase hydrolysis rate. Involved in the addition of a carboxymethylaminomethyl (cmnm) group at the wobble position (U34) of certain tRNAs, forming tRNA-cmnm(5)s(2)U34. The chain is tRNA modification GTPase MnmE from Neisseria gonorrhoeae (strain ATCC 700825 / FA 1090).